Reading from the N-terminus, the 356-residue chain is Peritrophin-44 (356 aa).

Residues 1–23 form the signal peptide; it reads MKELQITTGCLLLMVAAIGKTSA. 5 Chitin-binding type-2 domains span residues 28–85, 88–146, 147–201, 220–283, and 286–355; these read SETC…KCIS, KNAC…ECTA, DSIC…PCLA, NFVC…PCTF, and CGNL…YKLC. Cys-62 and Cys-75 are oxidised to a cystine. Asn-114 is a glycosylation site (N-linked (GlcNAc...) asparagine). Cystine bridges form between Cys-122–Cys-135, Cys-181–Cys-193, and Cys-262–Cys-273. An N-linked (GlcNAc...) asparagine glycan is attached at Asn-309.

Glycosylated. As to expression, larval peritrophic membrane.

Its function is as follows. May have roles in the maintenance of peritrophic membrane structure and in the determination of the porosity of the peritrophic membrane. May bind chitin or related oligosaccharide structures. The sequence is that of Peritrophin-44 from Lucilia cuprina (Green bottle fly).